We begin with the raw amino-acid sequence, 755 residues long: uncharacterized protein (755 aa).

Helical transmembrane passes span 46–66, 70–90, 93–113, 118–138, 143–163, 411–431, 446–466, 482–502, and 514–534; these read LGLG…GGLY, LKTI…GTIV, GWGL…YLAV, GAMV…NVST, FTSL…IWPF, IAHL…IFVL, LLGT…IQDP, ALLR…ALIL, and ALLS…GLAF.

This sequence belongs to the YccS/YhfK family.

It is found in the cell membrane. This is an uncharacterized protein from Synechocystis sp. (strain ATCC 27184 / PCC 6803 / Kazusa).